The following is a 101-amino-acid chain: Small ribosomal subunit protein uS14 (101 aa).

The protein belongs to the universal ribosomal protein uS14 family. As to quaternary structure, part of the 30S ribosomal subunit. Contacts proteins S3 and S10.

Functionally, binds 16S rRNA, required for the assembly of 30S particles and may also be responsible for determining the conformation of the 16S rRNA at the A site. The sequence is that of Small ribosomal subunit protein uS14 from Kocuria rhizophila (strain ATCC 9341 / DSM 348 / NBRC 103217 / DC2201).